The chain runs to 259 residues: MLTKRIIPCLDIKNGKVVKGINFVGLKEIGDPVEIAKIYEEQCADEIVFLDITASFEEREIIGELIGRAARELSIPLTVGGGIRSINDFRRILASGADKVSINSAAIENPELIHQAANEFGVQCVVVAIDAKANESGSSFEVYIKGGRENTGIDLVEWAKKCEKLGAGEILLTSMDKDGTKTGYDLKMLNAVCSAVNIPVIASGGCGSISDIIEVFEKTKSDAALFASLFHYGEATVDEVKEELIKNRIPARIIKKEII.

Catalysis depends on residues aspartate 11 and aspartate 130.

This sequence belongs to the HisA/HisF family. In terms of assembly, heterodimer of HisH and HisF.

Its subcellular location is the cytoplasm. It carries out the reaction 5-[(5-phospho-1-deoxy-D-ribulos-1-ylimino)methylamino]-1-(5-phospho-beta-D-ribosyl)imidazole-4-carboxamide + L-glutamine = D-erythro-1-(imidazol-4-yl)glycerol 3-phosphate + 5-amino-1-(5-phospho-beta-D-ribosyl)imidazole-4-carboxamide + L-glutamate + H(+). It participates in amino-acid biosynthesis; L-histidine biosynthesis; L-histidine from 5-phospho-alpha-D-ribose 1-diphosphate: step 5/9. Its function is as follows. IGPS catalyzes the conversion of PRFAR and glutamine to IGP, AICAR and glutamate. The HisF subunit catalyzes the cyclization activity that produces IGP and AICAR from PRFAR using the ammonia provided by the HisH subunit. This is Imidazole glycerol phosphate synthase subunit HisF from Lactococcus lactis subsp. cremoris (strain SK11).